The following is a 245-amino-acid chain: Polyhedrin (245 aa).

Belongs to the polyhedrin family.

Functionally, major component of the virus occlusion bodies, which are large proteinaceous structures (polyhedra), that protect the virus from the outside environment for extended periods until they are ingested by insect larvae. This is Polyhedrin (PH) from Hyphantria cunea nuclear polyhedrosis virus (HcNPV).